We begin with the raw amino-acid sequence, 312 residues long: DNA-directed RNA polymerase subunit alpha (312 aa).

Residues 1–229 (MLQYQIDRIE…ELFQPLATVT (229 aa)) are alpha N-terminal domain (alpha-NTD). Positions 239-312 (EPSAEAQIPL…ISIPQSRTSA (74 aa)) are alpha C-terminal domain (alpha-CTD).

Belongs to the RNA polymerase alpha chain family. In cyanobacteria the RNAP catalytic core is composed of 2 alpha, 1 beta, 1 beta', 1 gamma and 1 omega subunit. When a sigma factor is associated with the core the holoenzyme is formed, which can initiate transcription.

It carries out the reaction RNA(n) + a ribonucleoside 5'-triphosphate = RNA(n+1) + diphosphate. Functionally, DNA-dependent RNA polymerase catalyzes the transcription of DNA into RNA using the four ribonucleoside triphosphates as substrates. The polypeptide is DNA-directed RNA polymerase subunit alpha (Synechococcus sp. (strain CC9605)).